Here is a 94-residue protein sequence, read N- to C-terminus: UPF0298 protein SEQ_1830 (94 aa).

Belongs to the UPF0298 family.

It localises to the cytoplasm. In Streptococcus equi subsp. equi (strain 4047), this protein is UPF0298 protein SEQ_1830.